The chain runs to 287 residues: ATP synthase gamma chain (287 aa).

The protein belongs to the ATPase gamma chain family. In terms of assembly, F-type ATPases have 2 components, CF(1) - the catalytic core - and CF(0) - the membrane proton channel. CF(1) has five subunits: alpha(3), beta(3), gamma(1), delta(1), epsilon(1). CF(0) has three main subunits: a, b and c.

It localises to the cell inner membrane. Produces ATP from ADP in the presence of a proton gradient across the membrane. The gamma chain is believed to be important in regulating ATPase activity and the flow of protons through the CF(0) complex. The chain is ATP synthase gamma chain from Ruthia magnifica subsp. Calyptogena magnifica.